The primary structure comprises 207 residues: Large ribosomal subunit protein uL4 (207 aa).

The protein belongs to the universal ribosomal protein uL4 family. In terms of assembly, part of the 50S ribosomal subunit.

One of the primary rRNA binding proteins, this protein initially binds near the 5'-end of the 23S rRNA. It is important during the early stages of 50S assembly. It makes multiple contacts with different domains of the 23S rRNA in the assembled 50S subunit and ribosome. Functionally, forms part of the polypeptide exit tunnel. In Rickettsia conorii (strain ATCC VR-613 / Malish 7), this protein is Large ribosomal subunit protein uL4.